The following is a 435-amino-acid chain: Glutamate-1-semialdehyde 2,1-aminomutase (435 aa).

Residue Lys270 is modified to N6-(pyridoxal phosphate)lysine.

Belongs to the class-III pyridoxal-phosphate-dependent aminotransferase family. HemL subfamily. In terms of assembly, homodimer. Pyridoxal 5'-phosphate is required as a cofactor.

It localises to the cytoplasm. It carries out the reaction (S)-4-amino-5-oxopentanoate = 5-aminolevulinate. It participates in porphyrin-containing compound metabolism; protoporphyrin-IX biosynthesis; 5-aminolevulinate from L-glutamyl-tRNA(Glu): step 2/2. In Wigglesworthia glossinidia brevipalpis, this protein is Glutamate-1-semialdehyde 2,1-aminomutase.